Here is a 77-residue protein sequence, read N- to C-terminus: Large ribosomal subunit protein uL24 (77 aa).

It belongs to the universal ribosomal protein uL24 family. Part of the 50S ribosomal subunit.

Functionally, one of two assembly initiator proteins, it binds directly to the 5'-end of the 23S rRNA, where it nucleates assembly of the 50S subunit. In terms of biological role, one of the proteins that surrounds the polypeptide exit tunnel on the outside of the subunit. The protein is Large ribosomal subunit protein uL24 of Campylobacter jejuni subsp. doylei (strain ATCC BAA-1458 / RM4099 / 269.97).